The chain runs to 434 residues: Nicotinate phosphoribosyltransferase (434 aa).

His242 carries the phosphohistidine; by autocatalysis modification.

This sequence belongs to the NAPRTase family. In terms of processing, transiently phosphorylated on a His residue during the reaction cycle. Phosphorylation strongly increases the affinity for substrates and increases the rate of nicotinate D-ribonucleotide production. Dephosphorylation regenerates the low-affinity form of the enzyme, leading to product release.

The enzyme catalyses nicotinate + 5-phospho-alpha-D-ribose 1-diphosphate + ATP + H2O = nicotinate beta-D-ribonucleotide + ADP + phosphate + diphosphate. It participates in cofactor biosynthesis; NAD(+) biosynthesis; nicotinate D-ribonucleotide from nicotinate: step 1/1. Its function is as follows. Catalyzes the synthesis of beta-nicotinate D-ribonucleotide from nicotinate and 5-phospho-D-ribose 1-phosphate at the expense of ATP. The sequence is that of Nicotinate phosphoribosyltransferase from Rhizobium rhizogenes (strain K84 / ATCC BAA-868) (Agrobacterium radiobacter).